The sequence spans 418 residues: MLERETMSDQNRLVLAYSGGLDTSVAISYLKERTGKDVVAVSLDVGQGGESLETIKQRALACGAVEAYVVDARDEFANEYCMKALKANAMYEGVYPLVSAISRPLISKHLVRAAHQFGADTISHGCTGKGNDQVRFEVSIASIDPTLKAISPIRDLSLTRDVEIAFAKEHKLPIVQTEKSPFSIDQNVWGRAIETGFLEDPWNGPTKDCYSYTDDPAFPPVEDEVVIEFKQGVPVKIDGHDVTPLQAIEEMNRRAGAQGIGRIDLIEDRLVGIKSRELYEAPGAVALITAHQELENCCLEREQHRIKRDIDKRWAELVYDAQWFSPATQSLNAFIEDTQKYVSGEIRMVLHGGRAVVTGRRSDSSLYDYNLATYDSGDSFDQKSSNGFIDIYGLPSRVAAARDVKFGNGIEVPENSVE.

Residue 16-24 coordinates ATP; sequence AYSGGLDTS. Y95 provides a ligand contact to L-citrulline. Residue G125 participates in ATP binding. Residues T127, N131, and D132 each contribute to the L-aspartate site. Position 131 (N131) interacts with L-citrulline. L-citrulline contacts are provided by R135, S183, E267, and Y279.

This sequence belongs to the argininosuccinate synthase family. Type 1 subfamily. Homotetramer.

The protein localises to the cytoplasm. The catalysed reaction is L-citrulline + L-aspartate + ATP = 2-(N(omega)-L-arginino)succinate + AMP + diphosphate + H(+). It participates in amino-acid biosynthesis; L-arginine biosynthesis; L-arginine from L-ornithine and carbamoyl phosphate: step 2/3. In Bifidobacterium adolescentis (strain ATCC 15703 / DSM 20083 / NCTC 11814 / E194a), this protein is Argininosuccinate synthase.